The sequence spans 338 residues: Holliday junction branch migration complex subunit RuvB (338 aa).

The interval 4-186 (ADRLIAPDNP…FGITQRLEYY (183 aa)) is large ATPase domain (RuvB-L). ATP is bound by residues Ile25, Arg26, Gly67, Lys70, Thr71, Thr72, 133–135 (EDY), Arg176, Tyr186, and Arg223. Thr71 contributes to the Mg(2+) binding site. The tract at residues 187 to 257 (KVEDLQNIVQ…VADKALNMLD (71 aa)) is small ATPAse domain (RuvB-S). The interval 260–338 (AKGFDYMDRK…HFGIDKPSNR (79 aa)) is head domain (RuvB-H). 3 residues coordinate DNA: Arg296, Arg315, and Arg320.

It belongs to the RuvB family. In terms of assembly, homohexamer. Forms an RuvA(8)-RuvB(12)-Holliday junction (HJ) complex. HJ DNA is sandwiched between 2 RuvA tetramers; dsDNA enters through RuvA and exits via RuvB. An RuvB hexamer assembles on each DNA strand where it exits the tetramer. Each RuvB hexamer is contacted by two RuvA subunits (via domain III) on 2 adjacent RuvB subunits; this complex drives branch migration. In the full resolvosome a probable DNA-RuvA(4)-RuvB(12)-RuvC(2) complex forms which resolves the HJ.

It localises to the cytoplasm. It carries out the reaction ATP + H2O = ADP + phosphate + H(+). Functionally, the RuvA-RuvB-RuvC complex processes Holliday junction (HJ) DNA during genetic recombination and DNA repair, while the RuvA-RuvB complex plays an important role in the rescue of blocked DNA replication forks via replication fork reversal (RFR). RuvA specifically binds to HJ cruciform DNA, conferring on it an open structure. The RuvB hexamer acts as an ATP-dependent pump, pulling dsDNA into and through the RuvAB complex. RuvB forms 2 homohexamers on either side of HJ DNA bound by 1 or 2 RuvA tetramers; 4 subunits per hexamer contact DNA at a time. Coordinated motions by a converter formed by DNA-disengaged RuvB subunits stimulates ATP hydrolysis and nucleotide exchange. Immobilization of the converter enables RuvB to convert the ATP-contained energy into a lever motion, pulling 2 nucleotides of DNA out of the RuvA tetramer per ATP hydrolyzed, thus driving DNA branch migration. The RuvB motors rotate together with the DNA substrate, which together with the progressing nucleotide cycle form the mechanistic basis for DNA recombination by continuous HJ branch migration. Branch migration allows RuvC to scan DNA until it finds its consensus sequence, where it cleaves and resolves cruciform DNA. In Vibrio atlanticus (strain LGP32) (Vibrio splendidus (strain Mel32)), this protein is Holliday junction branch migration complex subunit RuvB.